We begin with the raw amino-acid sequence, 184 residues long: UPF0301 protein SPO0296 (184 aa).

The protein belongs to the UPF0301 (AlgH) family.

The sequence is that of UPF0301 protein SPO0296 from Ruegeria pomeroyi (strain ATCC 700808 / DSM 15171 / DSS-3) (Silicibacter pomeroyi).